Consider the following 698-residue polypeptide: Polyribonucleotide nucleotidyltransferase (698 aa).

The Mg(2+) site is built by Asp-490 and Asp-496. The 60-residue stretch at 557 to 616 (PKVVTMTIKPDKIRDVIGPGGKKINEIIDETGVKLDIEQDGTIFIGAVDQAMINRAREII) folds into the KH domain. Positions 626 to 694 (GQTYQATVKR…KQGRVNASHR (69 aa)) constitute an S1 motif domain.

The protein belongs to the polyribonucleotide nucleotidyltransferase family. Mg(2+) is required as a cofactor.

Its subcellular location is the cytoplasm. It carries out the reaction RNA(n+1) + phosphate = RNA(n) + a ribonucleoside 5'-diphosphate. Functionally, involved in mRNA degradation. Catalyzes the phosphorolysis of single-stranded polyribonucleotides processively in the 3'- to 5'-direction. This is Polyribonucleotide nucleotidyltransferase from Staphylococcus aureus (strain MSSA476).